Reading from the N-terminus, the 675-residue chain is NADH-ubiquinone oxidoreductase chain 5 (675 aa).

19 helical membrane passes run 3 to 23 (LLPL…GKFL), 27 to 47 (VLFV…WIFY), 75 to 95 (FLFD…SLLV), 108 to 127 (HIIR…LMLV), 132 to 154 (FVQL…NFWY), 177 to 197 (IYFS…GVVF), 211 to 231 (FLGF…LGAI), 251 to 271 (TPVS…FVLI), 284 to 304 (LFLV…VGLV), 311 to 329 (VIAY…ACGM), 334 to 354 (VGLF…LGAG), 380 to 400 (YVAI…TGFY), 413 to 433 (FSIN…ITSF), 462 to 482 (SFIF…GFIF), 519 to 539 (LIPL…YFVI), 564 to 584 (YFDL…FYLL), 593 to 613 (LIEL…SIIF), 624 to 644 (YIFV…SLFF), and 649 to 669 (SFFN…LSFG).

The protein belongs to the complex I subunit 5 family.

Its subcellular location is the mitochondrion inner membrane. It catalyses the reaction a ubiquinone + NADH + 5 H(+)(in) = a ubiquinol + NAD(+) + 4 H(+)(out). In terms of biological role, core subunit of the mitochondrial membrane respiratory chain NADH dehydrogenase (Complex I) that is believed to belong to the minimal assembly required for catalysis. Complex I functions in the transfer of electrons from NADH to the respiratory chain. The immediate electron acceptor for the enzyme is believed to be ubiquinone. The sequence is that of NADH-ubiquinone oxidoreductase chain 5 (ND5) from Acanthamoeba castellanii (Amoeba).